Consider the following 548-residue polypeptide: Chaperonin GroEL (548 aa).

ATP-binding positions include Thr-30–Pro-33, Lys-51, Asp-87–Thr-91, Gly-415, Asn-479–Ala-481, and Asp-495.

Belongs to the chaperonin (HSP60) family. As to quaternary structure, forms a cylinder of 14 subunits composed of two heptameric rings stacked back-to-back. Interacts with the co-chaperonin GroES.

The protein resides in the cytoplasm. The catalysed reaction is ATP + H2O + a folded polypeptide = ADP + phosphate + an unfolded polypeptide.. Its function is as follows. Together with its co-chaperonin GroES, plays an essential role in assisting protein folding. The GroEL-GroES system forms a nano-cage that allows encapsulation of the non-native substrate proteins and provides a physical environment optimized to promote and accelerate protein folding. This is Chaperonin GroEL from Serratia proteamaculans (strain 568).